A 702-amino-acid polypeptide reads, in one-letter code: Polyribonucleotide nucleotidyltransferase (702 aa).

Aspartate 487 and aspartate 493 together coordinate Mg(2+). Residues 554 to 613 enclose the KH domain; sequence PRLLTIKIHPDKIREVIGKGGSTIQAITKETGTQIDIQDDGTIVIASVNAIAAQAAKARI. Residues 623–691 enclose the S1 motif domain; sequence GRIYEGKVAK…KQGRIRLSMK (69 aa).

Belongs to the polyribonucleotide nucleotidyltransferase family. In terms of assembly, component of the RNA degradosome, which is a multiprotein complex involved in RNA processing and mRNA degradation. It depends on Mg(2+) as a cofactor.

It is found in the cytoplasm. The catalysed reaction is RNA(n+1) + phosphate = RNA(n) + a ribonucleoside 5'-diphosphate. Its function is as follows. Involved in mRNA degradation. Catalyzes the phosphorolysis of single-stranded polyribonucleotides processively in the 3'- to 5'-direction. In Stenotrophomonas maltophilia (strain R551-3), this protein is Polyribonucleotide nucleotidyltransferase.